A 384-amino-acid chain; its full sequence is Succinyl-diaminopimelate desuccinylase (384 aa).

Zn(2+) is bound at residue H71. D73 is an active-site residue. Residue D104 participates in Zn(2+) binding. The active-site Proton acceptor is the E138. Positions 139, 167, and 357 each coordinate Zn(2+).

The protein belongs to the peptidase M20A family. DapE subfamily. Homodimer. Requires Zn(2+) as cofactor. Co(2+) serves as cofactor.

The enzyme catalyses N-succinyl-(2S,6S)-2,6-diaminopimelate + H2O = (2S,6S)-2,6-diaminopimelate + succinate. Its pathway is amino-acid biosynthesis; L-lysine biosynthesis via DAP pathway; LL-2,6-diaminopimelate from (S)-tetrahydrodipicolinate (succinylase route): step 3/3. Its function is as follows. Catalyzes the hydrolysis of N-succinyl-L,L-diaminopimelic acid (SDAP), forming succinate and LL-2,6-diaminopimelate (DAP), an intermediate involved in the bacterial biosynthesis of lysine and meso-diaminopimelic acid, an essential component of bacterial cell walls. The sequence is that of Succinyl-diaminopimelate desuccinylase from Blochmanniella floridana.